Here is a 164-residue protein sequence, read N- to C-terminus: Ecotin (164 aa).

The N-terminal stretch at 1–20 (MKMFVPAVVFAALASASAWA) is a signal peptide. Cys72 and Cys109 form a disulfide bridge.

It belongs to the protease inhibitor I11 (ecotin) family. As to quaternary structure, homodimer.

Its subcellular location is the periplasm. Its function is as follows. General inhibitor of pancreatic serine proteases: inhibits chymotrypsin, trypsin, elastases, factor X, kallikrein as well as a variety of other proteases. This is Ecotin from Salmonella enteritidis PT4 (strain P125109).